A 101-amino-acid chain; its full sequence is Putative membrane protein insertion efficiency factor (101 aa).

It belongs to the UPF0161 family.

It is found in the cell inner membrane. Functionally, could be involved in insertion of integral membrane proteins into the membrane. In Methylobacterium sp. (strain 4-46), this protein is Putative membrane protein insertion efficiency factor.